A 691-amino-acid polypeptide reads, in one-letter code: Probable serine/threonine-protein kinase pXi (691 aa).

Residues 18-263 enclose the Protein kinase domain; sequence YEIGSQIGNG…IDQTLKHPWI (246 aa). ATP is bound by residues 24-32 and lysine 47; that span reads IGNGKFAQV. Aspartate 137 functions as the Proton acceptor in the catalytic mechanism. Disordered regions lie at residues 314-350, 420-447, 510-536, and 600-620; these read TPIK…ENEN, ENDS…KFTS, QHNN…GNGT, and GGSG…KKDK. The span at 322–336 shows a compositional bias: low complexity; that stretch reads NNNNNNNNNNNNNNN. Basic and acidic residues predominate over residues 338–350; sequence ILDKKSNENENEN. 3 stretches are compositionally biased toward low complexity: residues 423–433, 512–536, and 600–615; these read SSSSETYSSSS, NNNI…GNGT, and GGSG…TGGS. Positions 642-691 form a coiled coil; that stretch reads PKETMDKLASVLSNYKQKNQEKSLKVKYEKQKDKYKKLKSQLKKDKSLLK.

The protein belongs to the protein kinase superfamily. CAMK Ser/Thr protein kinase family.

The catalysed reaction is L-seryl-[protein] + ATP = O-phospho-L-seryl-[protein] + ADP + H(+). It carries out the reaction L-threonyl-[protein] + ATP = O-phospho-L-threonyl-[protein] + ADP + H(+). The chain is Probable serine/threonine-protein kinase pXi (pXi) from Dictyostelium discoideum (Social amoeba).